The chain runs to 635 residues: Threonine--tRNA ligase (635 aa).

The TGS domain maps to 1-61; the sequence is MVSIRLPDGS…DRDASLAIVT (61 aa). The interval 242–533 is catalytic; it reads DHRKLGKQLD…LIEHHAGAMP (292 aa). Zn(2+) contacts are provided by Cys-333, His-384, and His-510.

It belongs to the class-II aminoacyl-tRNA synthetase family. Homodimer. The cofactor is Zn(2+).

It localises to the cytoplasm. The catalysed reaction is tRNA(Thr) + L-threonine + ATP = L-threonyl-tRNA(Thr) + AMP + diphosphate + H(+). In terms of biological role, catalyzes the attachment of threonine to tRNA(Thr) in a two-step reaction: L-threonine is first activated by ATP to form Thr-AMP and then transferred to the acceptor end of tRNA(Thr). Also edits incorrectly charged L-seryl-tRNA(Thr). This Burkholderia cenocepacia (strain ATCC BAA-245 / DSM 16553 / LMG 16656 / NCTC 13227 / J2315 / CF5610) (Burkholderia cepacia (strain J2315)) protein is Threonine--tRNA ligase.